Reading from the N-terminus, the 269-residue chain is Shikimate dehydrogenase (NADP(+)) (269 aa).

Shikimate is bound by residues 17–19 and Thr-64; that span reads SKS. Lys-68 functions as the Proton acceptor in the catalytic mechanism. An NADP(+)-binding site is contributed by Glu-80. Shikimate contacts are provided by Asn-89 and Asp-105. NADP(+)-binding positions include 130–134, 154–159, and Met-213; these read GAGGA and NRTHTK. Residue Tyr-215 coordinates shikimate. NADP(+) is bound at residue Gly-237.

The protein belongs to the shikimate dehydrogenase family. Homodimer.

The catalysed reaction is shikimate + NADP(+) = 3-dehydroshikimate + NADPH + H(+). It participates in metabolic intermediate biosynthesis; chorismate biosynthesis; chorismate from D-erythrose 4-phosphate and phosphoenolpyruvate: step 4/7. In terms of biological role, involved in the biosynthesis of the chorismate, which leads to the biosynthesis of aromatic amino acids. Catalyzes the reversible NADPH linked reduction of 3-dehydroshikimate (DHSA) to yield shikimate (SA). This chain is Shikimate dehydrogenase (NADP(+)), found in Neisseria mucosa.